Consider the following 924-residue polypeptide: Isoleucine--tRNA ligase (924 aa).

Residues 58 to 68 (PYANGQIHVGH) carry the 'HIGH' region motif. Glu-561 lines the L-isoleucyl-5'-AMP pocket. The 'KMSKS' region motif lies at 602 to 606 (KMSKS). Lys-605 contacts ATP. Zn(2+) is bound by residues Cys-887, Cys-890, Cys-907, and Cys-910.

This sequence belongs to the class-I aminoacyl-tRNA synthetase family. IleS type 1 subfamily. Monomer. Requires Zn(2+) as cofactor.

Its subcellular location is the cytoplasm. It carries out the reaction tRNA(Ile) + L-isoleucine + ATP = L-isoleucyl-tRNA(Ile) + AMP + diphosphate. Catalyzes the attachment of isoleucine to tRNA(Ile). As IleRS can inadvertently accommodate and process structurally similar amino acids such as valine, to avoid such errors it has two additional distinct tRNA(Ile)-dependent editing activities. One activity is designated as 'pretransfer' editing and involves the hydrolysis of activated Val-AMP. The other activity is designated 'posttransfer' editing and involves deacylation of mischarged Val-tRNA(Ile). The sequence is that of Isoleucine--tRNA ligase from Dichelobacter nodosus (strain VCS1703A).